We begin with the raw amino-acid sequence, 677 residues long: Vertnin (677 aa).

2 disordered regions span residues 356–376 (GSTG…SSPE) and 458–490 (HSGS…KLSP). Residues 458-472 (HSGSSEEGSDADKSQ) are compositionally biased toward basic and acidic residues.

This sequence belongs to the vertnin family.

It is found in the nucleus. In terms of biological role, functions as a transcriptional repressor that modulates bmp2b expression during dorsoventral patterning. The polypeptide is Vertnin (vrtn) (Danio rerio (Zebrafish)).